The following is a 163-amino-acid chain: Probable RNA-binding protein EIF1AD (163 aa).

The S1-like domain occupies Met-18–Thr-96. Residues Ala-106–Asp-163 form a disordered region. Acidic residues-rich tracts occupy residues Asp-126–Leu-136 and Glu-146–Asp-163.

Belongs to the EIF1AD family.

This Drosophila pseudoobscura pseudoobscura (Fruit fly) protein is Probable RNA-binding protein EIF1AD.